A 376-amino-acid chain; its full sequence is Small RNA 2'-O-methyltransferase (376 aa).

3 residues coordinate S-adenosyl-L-methionine: T49, D67, and S103. The Mg(2+) site is built by E121, E124, H125, and H171.

This sequence belongs to the methyltransferase superfamily. HEN1 family. It depends on Mg(2+) as a cofactor.

The protein localises to the cytoplasm. The catalysed reaction is small RNA 3'-end nucleotide + S-adenosyl-L-methionine = small RNA 3'-end 2'-O-methylnucleotide + S-adenosyl-L-homocysteine + H(+). Its function is as follows. Methyltransferase that adds a 2'-O-methyl group at the 3'-end of piRNAs, a class of 24 to 30 nucleotide RNAs that are generated by a Dicer-independent mechanism and are primarily derived from transposons and other repeated sequence elements. This probably protects the 3'-end of piRNAs from uridylation activity and subsequent degradation. Stabilization of piRNAs is essential for gametogenesis. This chain is Small RNA 2'-O-methyltransferase (HENMT1), found in Gallus gallus (Chicken).